We begin with the raw amino-acid sequence, 189 residues long: Ion-translocating oxidoreductase complex subunit B (189 aa).

Residues 1 to 26 (MSGIFIAIILLTILALLFGILLGFAA) form a hydrophobic region. A 4Fe-4S domain is found at 32-90 (EGDPLVDQLEALLPQTQCGQCGYPGCRPYAEAIANGEKINLCPPGGSATMEKLAEMAGV). [4Fe-4S] cluster contacts are provided by Cys49, Cys52, Cys57, Cys73, Cys114, Cys117, Cys120, Cys124, Cys144, Cys147, Cys150, and Cys154. 4Fe-4S ferredoxin-type domains are found at residues 105-134 (KVAY…GSGK) and 135-164 (LMHT…MLPV).

Belongs to the 4Fe4S bacterial-type ferredoxin family. RnfB subfamily. As to quaternary structure, the complex is composed of six subunits: RnfA, RnfB, RnfC, RnfD, RnfE and RnfG. The cofactor is [4Fe-4S] cluster.

Its subcellular location is the cell inner membrane. Functionally, part of a membrane-bound complex that couples electron transfer with translocation of ions across the membrane. The chain is Ion-translocating oxidoreductase complex subunit B from Shewanella sediminis (strain HAW-EB3).